The primary structure comprises 247 residues: UPF0309 protein Teth39_1980 (247 aa).

The 183-residue stretch at isoleucine 31–lysine 213 folds into the SIS domain.

The protein belongs to the UPF0309 family.

This Thermoanaerobacter pseudethanolicus (strain ATCC 33223 / 39E) (Clostridium thermohydrosulfuricum) protein is UPF0309 protein Teth39_1980.